Here is a 211-residue protein sequence, read N- to C-terminus: Ribosomal RNA small subunit methyltransferase G (211 aa).

S-adenosyl-L-methionine is bound by residues Gly74, Leu79, 125–126 (AE), and Arg140.

Belongs to the methyltransferase superfamily. RNA methyltransferase RsmG family.

Its subcellular location is the cytoplasm. Its function is as follows. Specifically methylates the N7 position of guanine in position 518 of 16S rRNA. In Clavibacter sepedonicus (Clavibacter michiganensis subsp. sepedonicus), this protein is Ribosomal RNA small subunit methyltransferase G.